Reading from the N-terminus, the 378-residue chain is Probable endopolygalacturonase E (378 aa).

The N-terminal stretch at 1–19 (MVTSSSVIVLTLWAALVSA) is a signal peptide. A propeptide spanning residues 20 to 38 (SPVADPLVTPAPKLEDLEK) is cleaved from the precursor. Residues Cys-43 and Cys-61 are joined by a disulfide bond. PbH1 repeat units lie at residues 103-125 (GPLV…YLNG), 174-204 (STYL…DIGD), and 205-226 (STYI…AVNS). The active-site Proton donor is Asp-219. A disulfide bond links Cys-221 and Cys-237. The active site involves His-241. 3 PbH1 repeats span residues 256-277 (VKNV…RIKT), 285-307 (VSEV…VVEQ), and 317-345 (TDGI…YIVC). Asn-258 carries N-linked (GlcNAc...) asparagine glycosylation. Disulfide bonds link Cys-345/Cys-350 and Cys-369/Cys-378.

The protein belongs to the glycosyl hydrolase 28 family.

It localises to the secreted. The catalysed reaction is (1,4-alpha-D-galacturonosyl)n+m + H2O = (1,4-alpha-D-galacturonosyl)n + (1,4-alpha-D-galacturonosyl)m.. Functionally, involved in maceration and soft-rotting of plant tissue. Hydrolyzes the 1,4-alpha glycosidic bonds of de-esterified pectate in the smooth region of the plant cell wall. The sequence is that of Probable endopolygalacturonase E (pgaE) from Aspergillus niger (strain ATCC MYA-4892 / CBS 513.88 / FGSC A1513).